A 192-amino-acid chain; its full sequence is Ion-translocating oxidoreductase complex subunit A (192 aa).

Helical transmembrane passes span 5–25, 39–59, 65–85, 102–122, 134–154, and 171–191; these read LLLL…FLGL, IGMS…SYLV, LPFD…AVVV, ALGI…VALL, AIYG…FSAM, and AIAM…TGLV.

It belongs to the NqrDE/RnfAE family. In terms of assembly, the complex is composed of six subunits: RnfA, RnfB, RnfC, RnfD, RnfE and RnfG.

It localises to the cell inner membrane. Functionally, part of a membrane-bound complex that couples electron transfer with translocation of ions across the membrane. This chain is Ion-translocating oxidoreductase complex subunit A, found in Shewanella sp. (strain MR-4).